A 675-amino-acid polypeptide reads, in one-letter code: Cytoplasmic tyrosine-protein kinase BMX (675 aa).

Residues 4-111 form the PH domain; sequence KSILEELLLK…WLKALQKEIR (108 aa). The segment at 113-149 adopts a Btk-type zinc-finger fold; sequence NPHLLVKYHSGFFVDGKFLCCQQSCKAAPGCTLWEAY. Zn(2+) is bound by residues histidine 121, cysteine 132, cysteine 133, and cysteine 143. Phosphotyrosine; by autocatalysis occurs at positions 216 and 224. Positions 296–392 constitute an SH2 domain; that stretch reads WFAGNISRSQ…GMITRLRHPV (97 aa). One can recognise a Protein kinase domain in the interval 417 to 675; the sequence is ITLLKELGSG…IEPLREKDKH (259 aa). ATP-binding positions include 423–431 and lysine 445; that span reads LGSGQFGVV. Residue aspartate 536 is the Proton acceptor of the active site. Tyrosine 566 is modified (phosphotyrosine; by SRC and autocatalysis). The short motif at 596–603 is the CAV1-binding element; sequence WAFGILMW.

The protein belongs to the protein kinase superfamily. Tyr protein kinase family. TEC subfamily. As to quaternary structure, interacts with BCAR1, CAV1, MYD88, PTK2/FAK1, RUFY1, RUFY2, STAT3, TIRAP and TNFRSF1B. Zn(2+) is required as a cofactor. In terms of processing, phosphorylated in response to protein I/II and to LPS. Phosphorylation at Tyr-566 by SRC and by autocatalysis leads to activation and is required for STAT3 phosphorylation by BMX. As to expression, highly expressed in cells with great migratory potential, including endothelial cells and metastatic carcinoma cell lines.

The protein resides in the cytoplasm. The enzyme catalyses L-tyrosyl-[protein] + ATP = O-phospho-L-tyrosyl-[protein] + ADP + H(+). With respect to regulation, TEK and vascular endothelial growth factor receptor 1 (FLT1) stimulate BMX tyrosine kinase activity. Activated by integrins through the mediation of PTK2/FAK1. Activated by TNF through the mediation of TNFRSF1B. Its function is as follows. Non-receptor tyrosine kinase that plays central but diverse modulatory roles in various signaling processes involved in the regulation of actin reorganization, cell migration, cell proliferation and survival, cell adhesion, and apoptosis. Participates in signal transduction stimulated by growth factor receptors, cytokine receptors, G-protein coupled receptors, antigen receptors and integrins. Induces tyrosine phosphorylation of BCAR1 in response to integrin regulation. Activation of BMX by integrins is mediated by PTK2/FAK1, a key mediator of integrin signaling events leading to the regulation of actin cytoskeleton and cell motility. Plays a critical role in TNF-induced angiogenesis, and implicated in the signaling of TEK and FLT1 receptors, 2 important receptor families essential for angiogenesis. Required for the phosphorylation and activation of STAT3, a transcription factor involved in cell differentiation. Also involved in interleukin-6 (IL6) induced differentiation. Also plays a role in programming adaptive cytoprotection against extracellular stress in different cell systems, salivary epithelial cells, brain endothelial cells, and dermal fibroblasts. May be involved in regulation of endocytosis through its interaction with an endosomal protein RUFY1. May also play a role in the growth and differentiation of hematopoietic cells; as well as in signal transduction in endocardial and arterial endothelial cells. The sequence is that of Cytoplasmic tyrosine-protein kinase BMX (BMX) from Homo sapiens (Human).